Here is a 415-residue protein sequence, read N- to C-terminus: Protein fuzzy homolog (415 aa).

This sequence belongs to the fuzzy family. Component of the CPLANE (ciliogenesis and planar polarity effectors) complex, composed of INTU, FUZ and WDPCP. Interacts with CPLANE1. Interacts with CPLANE2. Expressed in dermal and epidermal cells.

It is found in the cytoplasm. The protein resides in the cytoskeleton. The protein localises to the cilium basal body. Its function is as follows. Probable planar cell polarity effector involved in cilium biogenesis. May regulate protein and membrane transport to the cilium. Proposed to function as core component of the CPLANE (ciliogenesis and planar polarity effectors) complex involved in the recruitment of peripheral IFT-A proteins to basal bodies. May regulate the morphogenesis of hair follicles which depends on functional primary cilia. Binds phosphatidylinositol 3-phosphate with highest affinity, followed by phosphatidylinositol 4-phosphate and phosphatidylinositol 5-phosphate. The polypeptide is Protein fuzzy homolog (Fuz) (Mus musculus (Mouse)).